A 134-amino-acid polypeptide reads, in one-letter code: Probable 4-amino-4-deoxy-L-arabinose-phosphoundecaprenol flippase subunit ArnF (134 aa).

The Cytoplasmic portion of the chain corresponds to 1 to 5 (MNRRR). Residues 6-26 (GILFALASVLLVSVAQLSMRW) traverse the membrane as a helical segment. At 27–45 (SMTRLPRPDQWLSVPSVDS) the chain is on the periplasmic side. The helical transmembrane segment at 46–66 (VALAVVLAAIFAYALSMLCWL) threads the bilayer. Residues 67 to 77 (AALRDLPLGRA) lie on the Cytoplasmic side of the membrane. A helical membrane pass occupies residues 78–98 (YSLLSISYALVYLLAASLPLF). At 99–101 (NES) the chain is on the periplasmic side. Residues 102 to 122 (FSFSKSLGVALVMLGVITINT) form a helical membrane-spanning segment. The Cytoplasmic portion of the chain corresponds to 123-134 (RPARAPELRSSP).

The protein belongs to the ArnF family. Heterodimer of ArnE and ArnF.

It is found in the cell inner membrane. The protein operates within bacterial outer membrane biogenesis; lipopolysaccharide biosynthesis. In terms of biological role, translocates 4-amino-4-deoxy-L-arabinose-phosphoundecaprenol (alpha-L-Ara4N-phosphoundecaprenol) from the cytoplasmic to the periplasmic side of the inner membrane. This Pseudomonas fluorescens (strain Pf0-1) protein is Probable 4-amino-4-deoxy-L-arabinose-phosphoundecaprenol flippase subunit ArnF.